A 558-amino-acid chain; its full sequence is TNF receptor-associated factor 5 (558 aa).

The segment at 45 to 85 (CAFCHSVLHNPHQTGCGHRFCQQCIRSLRELNSVPICPVDK) adopts an RING-type zinc-finger fold. TRAF-type zinc fingers lie at residues 127–181 (DHLQ…TNLQ) and 182–239 (DHEE…GNLL). Residues 252 to 302 (LVLEKNYQLEQRISDLYQSLEQKESKIQQLAETVKKFEKELKQFTQMFGRN) adopt a coiled-coil conformation. Residue K318 forms a Glycyl lysine isopeptide (Lys-Gly) (interchain with G-Cter in ubiquitin) linkage. A coiled-coil region spans residues 340 to 400 (LDLRSLVDAV…EERFKQLEGA (61 aa)). Positions 345–558 (LVDAVDSVKQ…AVDLTDLEDL (214 aa)) are interaction with EIF2AK2/PKR. The MATH domain maps to 403 to 550 (SGKLIWKVTD…DDTLFLKVAV (148 aa)).

This sequence belongs to the TNF receptor-associated factor family. A subfamily. In terms of assembly, homotrimer. Heterotrimer with TRAF3. Associates with TNFRSF5/CD40 through interaction with TRAF3. Associates with LTBR/TNFRSF3, TNFRSF4, TNFRSF8/CD30, TNFRSF11A/RANK, TNFRSF13B/TACI, TNFRSF14, TNFRSF17, TNFRSF19/TROY, RIPK2, MAP3K14, MAP3K5, and TRAF and TNF receptor associated protein TDP2. Interacts (via C-terminus) with EIF2AK2/PKR (via the kinase catalytic domain). Post-translationally, ubiquitinated at Lys-318 by the SCF(FBXL2) complex, leading to its degradation by the proteasome.

The protein localises to the cytoplasm. Its subcellular location is the cytosol. Adapter protein and signal transducer that links members of the tumor necrosis factor receptor family to different signaling pathways by association with the receptor cytoplasmic domain and kinases. Mediates activation of NF-kappa-B and probably JNK. Seems to be involved in apoptosis. Plays a role in mediating activation of NF-kappa-B by EIF2AK2/PKR. This Mus musculus (Mouse) protein is TNF receptor-associated factor 5 (Traf5).